The sequence spans 394 residues: Dihydroorotase (394 aa).

Residues His15, His17, Lys98, His135, His175, and Asp245 each contribute to the Zn(2+) site. Lys98 bears the N6-carboxylysine mark.

It belongs to the metallo-dependent hydrolases superfamily. DHOase family. Class II DHOase subfamily. Zn(2+) is required as a cofactor.

The enzyme catalyses (S)-dihydroorotate + H2O = N-carbamoyl-L-aspartate + H(+). The protein operates within pyrimidine metabolism; UMP biosynthesis via de novo pathway; (S)-dihydroorotate from bicarbonate: step 3/3. This chain is Dihydroorotase (PYR3), found in Mycosarcoma maydis (Corn smut fungus).